Reading from the N-terminus, the 187-residue chain is Elongation factor P (187 aa).

The protein belongs to the elongation factor P family.

Its subcellular location is the cytoplasm. The protein operates within protein biosynthesis; polypeptide chain elongation. Involved in peptide bond synthesis. Stimulates efficient translation and peptide-bond synthesis on native or reconstituted 70S ribosomes in vitro. Probably functions indirectly by altering the affinity of the ribosome for aminoacyl-tRNA, thus increasing their reactivity as acceptors for peptidyl transferase. This chain is Elongation factor P, found in Corynebacterium aurimucosum (strain ATCC 700975 / DSM 44827 / CIP 107346 / CN-1) (Corynebacterium nigricans).